Consider the following 660-residue polypeptide: UvrABC system protein C (660 aa).

A GIY-YIG domain is found at 16-95 (ESPGVYRFRD…IKQYDPRFNV (80 aa)). A UVR domain is found at 208-243 (DAMVRRLEREMAEASAELEFERAARLRDDLAALRRA). Positions 469–501 (GEAGVESAGDPDAPAGPDAPDEPRVGTLVDPTT) are disordered. Low complexity predominate over residues 476 to 486 (AGDPDAPAGPD).

The protein belongs to the UvrC family. Interacts with UvrB in an incision complex.

It is found in the cytoplasm. The UvrABC repair system catalyzes the recognition and processing of DNA lesions. UvrC both incises the 5' and 3' sides of the lesion. The N-terminal half is responsible for the 3' incision and the C-terminal half is responsible for the 5' incision. In Salinispora arenicola (strain CNS-205), this protein is UvrABC system protein C.